A 547-amino-acid chain; its full sequence is Cytochrome P450 monooxygenase cpsD (547 aa).

The helical transmembrane segment at 18–38 threads the bilayer; sequence LTGAALVVTLITSVIIVAADL. Cys-476 contributes to the heme binding site. The tract at residues 528–547 is disordered; it reads RRRDARRTHEALGSKLKPEE. Residues 534–547 are compositionally biased toward basic and acidic residues; sequence RTHEALGSKLKPEE.

The protein belongs to the cytochrome P450 family. Heme serves as cofactor.

The protein localises to the membrane. It carries out the reaction campesine B + campesine C + reduced [NADPH--hemoprotein reductase] + O2 = campesine D + oxidized [NADPH--hemoprotein reductase] + 2 H2O + 2 H(+). The catalysed reaction is 2 campesine B + reduced [NADPH--hemoprotein reductase] + O2 = campesine F + oxidized [NADPH--hemoprotein reductase] + 2 H2O + H(+). It catalyses the reaction campesine C + campesine A + reduced [NADPH--hemoprotein reductase] + O2 = campesine E + oxidized [NADPH--hemoprotein reductase] + 2 H2O + 2 H(+). It functions in the pathway alkaloid biosynthesis. Functionally, cytochrome P450 monooxygenase; part of the gene cluster that mediates the biosynthesis of campesine G, a dimeric indole piperazine alkaloid that shows good insecticidal activity Galleria mellonella. Within the pathway, cpsD acts as a dimerase that simultaneously catalyzes one C-C bond (C3-C3') and two C-N bonds (C2-N16' and C2'-N16) coupling reactions between campesines B and C to produce a heterodimer with unexpected 6/5/6/6/6/6/5/6 eight-ring scaffold called campesine D. CpsD is also able to catalyze oxidative heterocoupling od campesines A with B to produce campesine F and campesines A with C to produce campesine E. The non-canonical non-ribosomal peptide synthetase cpsA catalyzes the first steps of the pathway by producing L-tryptophanal and L-valinal from their respective amino-acids. These products condensate spontaneously to form trypyl-valyl pyrazine also known as didehydrocampesine A. The NmrA-like family domain-containing oxidoreductase cpsB is the next enzyme in cps pathway and reduces the unstable didehydrocampesine A to campesine A. The methyltransferase cpsF and the acetyltransferase cpsE both recognize N13 of piperazine ring to carry out methylation and acetylation of campesine A to produce campesine C and B, respectively. The cytochrome P450 monooxygenase cpsD then acts as a dimerase that catalyzes oxidative heterocoupling between campesine B and C to produce heterodimers with unexpected 6/5/6/6/6/6/5/6 eight-ring scaffold called campesine D. Finally,the cytochrome P450 monooxygenase cpsC is a regioselective dehydrogenase that catalyzes dehydrogenation reaction towards C2-N1 to produce campesine G. The sequence is that of Cytochrome P450 monooxygenase cpsD from Aspergillus campestris (strain IBT 28561).